We begin with the raw amino-acid sequence, 141 residues long: MSNKKVIKLIKLQIPGGKANPAPPIGPALGAAGVNIMGFCKEFNAATQDRPGDLLPVVITVYSDKTFTFITKQPPVSSLIKKALNLESGSKIPNRNKVGKLTQAQVTAIAEQKMKDMDVVLLDSAKRMVEGTARSMGIDVE.

This sequence belongs to the universal ribosomal protein uL11 family. As to quaternary structure, part of the ribosomal stalk of the 50S ribosomal subunit. Interacts with L10 and the large rRNA to form the base of the stalk. L10 forms an elongated spine to which L12 dimers bind in a sequential fashion forming a multimeric L10(L12)X complex. In terms of processing, one or more lysine residues are methylated.

Forms part of the ribosomal stalk which helps the ribosome interact with GTP-bound translation factors. In Chlamydia caviae (strain ATCC VR-813 / DSM 19441 / 03DC25 / GPIC) (Chlamydophila caviae), this protein is Large ribosomal subunit protein uL11.